The chain runs to 210 residues: Nta operon transcriptional regulator (210 aa).

Residues 1-55 (MAVSYHFRPGERINEVELAAQLKVSRTPLREALNRLTTEGFLTTTANKGFFARVL) enclose the HTH gntR-type domain. Residues 15-34 (EVELAAQLKVSRTPLREALN) constitute a DNA-binding region (H-T-H motif).

Functionally, probable regulator for the expression of the NTA monooxygenase subunits. The sequence is that of Nta operon transcriptional regulator (ntaR) from Aminobacter aminovorans (Chelatobacter heintzii).